The chain runs to 182 residues: Type-1 fimbrial protein, A chain (182 aa).

Positions 1-23 are cleaved as a signal peptide; it reads MKIKTLAIVVLSALSLSSTAALA. The cysteines at positions 44 and 84 are disulfide-linked.

The protein belongs to the fimbrial protein family.

Its subcellular location is the fimbrium. Its function is as follows. Fimbriae (also called pili), polar filaments radiating from the surface of the bacterium to a length of 0.5-1.5 micrometers and numbering 100-300 per cell, enable bacteria to colonize the epithelium of specific host organs. The sequence is that of Type-1 fimbrial protein, A chain (fimA) from Escherichia coli (strain K12).